The following is a 335-amino-acid chain: Putative D-threonate 4-phosphate dehydrogenase (335 aa).

Positions 140 and 141 each coordinate substrate. Residues histidine 170, histidine 214, and histidine 269 each coordinate a divalent metal cation. Substrate contacts are provided by lysine 277 and arginine 295.

Belongs to the PdxA family. PdxA2 subfamily. As to quaternary structure, homodimer. Requires a divalent metal cation as cofactor.

The catalysed reaction is 4-O-phospho-D-threonate + NAD(+) = dihydroxyacetone phosphate + CO2 + NADH. In terms of biological role, catalyzes the NAD-dependent oxidation and subsequent decarboxylation of D-threonate 4-phosphate to produce dihydroxyacetone phosphate (DHAP). The polypeptide is Putative D-threonate 4-phosphate dehydrogenase (Symbiobacterium thermophilum (strain DSM 24528 / JCM 14929 / IAM 14863 / T)).